The sequence spans 79 residues: Major outer membrane lipoprotein Lpp 2 (79 aa).

The N-terminal stretch at 1 to 21 (MNRTNKLILGAVVLGSTLLAG) is a signal peptide. C22 is lipidated: N-palmitoyl cysteine. C22 carries the S-diacylglycerol cysteine lipid modification. Repeats lie at residues 25–35 (NAKIDQLSSDV) and 39–49 (SAKVDQLSNDV). A coiled-coil region spans residues 28-69 (IDQLSSDVQTLSAKVDQLSNDVNAMRSDVQAAKDDAARANQR). K79 carries the N6-murein peptidoglycan lysine modification.

Belongs to the Lpp family. As to quaternary structure, homotrimer.

The protein resides in the cell outer membrane. The protein localises to the secreted. It localises to the cell wall. Its function is as follows. A highly abundant outer membrane lipoprotein that controls the distance between the inner and outer membranes. The only protein known to be covalently linked to the peptidoglycan network (PGN). Also non-covalently binds the PGN. The link between the cell outer membrane and PGN contributes to maintenance of the structural and functional integrity of the cell envelope, and maintains the correct distance between the PGN and the outer membrane. In Salmonella typhi, this protein is Major outer membrane lipoprotein Lpp 2.